Reading from the N-terminus, the 306-residue chain is MANTWWEIQILCESALEDSVSWRLEDFGCRGTASESKGDSCLVKGYLPIFQAQLLDLAALGLWLQQDALCIGLSSPTLTWQLIDEEDWASSWKQYWHPQEIGDRFLINPAWLPSPENYDRLVIRLDPGVAFGTGNHATTQLCLESLEMRLSQVPKSFVSKDAGQEPVIIADIGCGSGILSIGAILLGAEKVYAVDTDPLAVQSTFSNRALNEVNPERLVPAEGSVDILKKLIERPVDGIVCNILADVIIQLVPEISEISKPSTWAIFSGILVEQSTSVVEALEKHGWVVATMWKRKEWCCLNVRRT.

The S-adenosyl-L-methionine site is built by Thr139, Gly173, Asp195, and Asn242.

It belongs to the methyltransferase superfamily. PrmA family.

The protein resides in the cytoplasm. It catalyses the reaction L-lysyl-[protein] + 3 S-adenosyl-L-methionine = N(6),N(6),N(6)-trimethyl-L-lysyl-[protein] + 3 S-adenosyl-L-homocysteine + 3 H(+). Functionally, methylates ribosomal protein L11. This is Ribosomal protein L11 methyltransferase from Trichormus variabilis (strain ATCC 29413 / PCC 7937) (Anabaena variabilis).